The chain runs to 274 residues: Putative septum site-determining protein MinD (274 aa).

22-29 (KGGVGKTT) serves as a coordination point for ATP.

This sequence belongs to the ParA family. MinD subfamily.

The protein resides in the plastid. It is found in the chloroplast. In terms of biological role, ATPase required for the correct placement of the division site. The polypeptide is Putative septum site-determining protein MinD (minD-A) (Nephroselmis olivacea (Green alga)).